Consider the following 40-residue polypeptide: Photosystem II reaction center protein X (40 aa).

Residues 10–30 traverse the membrane as a helical segment; it reads WSLVWGTVIVVIPVTVGLVFI.

The protein belongs to the PsbX family. Type 1 subfamily. PSII is composed of 1 copy each of membrane proteins PsbA, PsbB, PsbC, PsbD, PsbE, PsbF, PsbH, PsbI, PsbJ, PsbK, PsbL, PsbM, PsbT, PsbX, PsbY, PsbZ, Psb30/Ycf12, peripheral proteins PsbO, CyanoQ (PsbQ), PsbU, PsbV and a large number of cofactors. It forms dimeric complexes.

The protein resides in the cellular thylakoid membrane. Its function is as follows. Involved in the binding and/or turnover of quinones at the Q(B) site of photosystem II (PSII). PSII is a light-driven water plastoquinone oxidoreductase, using light energy to abstract electrons from H(2)O, generating a proton gradient subsequently used for ATP formation. The protein is Photosystem II reaction center protein X of Crocosphaera subtropica (strain ATCC 51142 / BH68) (Cyanothece sp. (strain ATCC 51142)).